Reading from the N-terminus, the 293-residue chain is Glycine--tRNA ligase alpha subunit (293 aa).

This sequence belongs to the class-II aminoacyl-tRNA synthetase family. Tetramer of two alpha and two beta subunits.

The protein localises to the cytoplasm. The catalysed reaction is tRNA(Gly) + glycine + ATP = glycyl-tRNA(Gly) + AMP + diphosphate. This chain is Glycine--tRNA ligase alpha subunit, found in Sulfurimonas denitrificans (strain ATCC 33889 / DSM 1251) (Thiomicrospira denitrificans (strain ATCC 33889 / DSM 1251)).